An 82-amino-acid polypeptide reads, in one-letter code: DinI-like protein (82 aa).

The protein belongs to the DinI family.

The chain is DinI-like protein from Enterobacteria phage VT1-Sakai.